The primary structure comprises 283 residues: Probable 3-deoxy-manno-octulosonic acid transferase (283 aa).

It localises to the cytoplasm. It carries out the reaction an alpha-Kdo-(2-&gt;4)-alpha-Kdo-(2-&gt;6)-lipid IVA + CMP-3-deoxy-beta-D-manno-octulosonate = an alpha-Kdo-(2-&gt;4)-alpha-Kdo-(2-&gt;4)-alpha-Kdo-(2-&gt;6)-lipid IVA + CMP + H(+). The catalysed reaction is alpha-Kdo-(2-&gt;4)-alpha-Kdo-(2-&gt;6)-lipid IVA (E. coli) + CMP-3-deoxy-beta-D-manno-octulosonate = alpha-Kdo-(2-&gt;4)-alpha-Kdo-(2-&gt;4)-alpha-Kdo-(2-&gt;6)-lipid IVA + CMP + H(+). It functions in the pathway bacterial outer membrane biogenesis; LPS core biosynthesis. Its pathway is bacterial outer membrane biogenesis; LOS core biosynthesis. Involved in the biosynthesis of the core oligosaccharide region of lipopolysaccharide (LPS). Required for the addition of 3-deoxy-D-manno-oct-2-ulosonic acid III (KdoIII) to the KdoII residue of the inner lipopolysaccharide core. May also play a role in a lipooligosaccharide (LOS) biosynthesis pathway. The protein is Probable 3-deoxy-manno-octulosonic acid transferase of Escherichia coli (strain K12).